Reading from the N-terminus, the 269-residue chain is Tryptophan synthase alpha chain (269 aa).

Active-site proton acceptor residues include E41 and D52.

The protein belongs to the TrpA family. In terms of assembly, tetramer of two alpha and two beta chains.

It carries out the reaction (1S,2R)-1-C-(indol-3-yl)glycerol 3-phosphate + L-serine = D-glyceraldehyde 3-phosphate + L-tryptophan + H2O. Its pathway is amino-acid biosynthesis; L-tryptophan biosynthesis; L-tryptophan from chorismate: step 5/5. Its function is as follows. The alpha subunit is responsible for the aldol cleavage of indoleglycerol phosphate to indole and glyceraldehyde 3-phosphate. In Geobacillus stearothermophilus (Bacillus stearothermophilus), this protein is Tryptophan synthase alpha chain.